A 210-amino-acid chain; its full sequence is MPSSTPPALFPTLYLASQSPRRQELLQQIGVRFELLLPRPDEDAEALEAELPGEAADAYVRRVTIAKAEAARARLVASGKPASPVLVADTTVTIDGAILGKPANADDALSMLTRLAGREHAVLTAVAVIDADGELLPPALSRSSVRFAPASRDAYARYVESGEPFGKAGAYAIQGRAAEFIERIDGSHSGIMGLPLFETAALLRAARVAF.

D89 acts as the Proton acceptor in catalysis.

It belongs to the Maf family. YhdE subfamily. The cofactor is a divalent metal cation.

Its subcellular location is the cytoplasm. It catalyses the reaction dTTP + H2O = dTMP + diphosphate + H(+). The enzyme catalyses UTP + H2O = UMP + diphosphate + H(+). In terms of biological role, nucleoside triphosphate pyrophosphatase that hydrolyzes dTTP and UTP. May have a dual role in cell division arrest and in preventing the incorporation of modified nucleotides into cellular nucleic acids. The chain is dTTP/UTP pyrophosphatase from Burkholderia lata (strain ATCC 17760 / DSM 23089 / LMG 22485 / NCIMB 9086 / R18194 / 383).